The sequence spans 51 residues: Magnetosome protein Mms5 (51 aa).

Residues 1-12 (MLSAKGVSLGLG) lie on the Lumenal side of the membrane. An LG region region spans residues 9 to 16 (LGLGLGLG). The helical transmembrane segment at 13–33 (LGLGAWGPVLLGVVGVAGAIA) threads the bilayer. The Cytoplasmic segment spans residues 34–51 (LYGYYKNRNAEPAAAEAV).

Belongs to the magnetosome MamD/Mms5 family. Post-translationally, seen in gels as a band of about 5 kDa, with an N-terminus that corresponds to residue 8, suggesting it may undergo N-terminal cleavage.

It localises to the magnetosome membrane. Functionally, might be involved in magnetite crystal growth. The sequence is that of Magnetosome protein Mms5 from Paramagnetospirillum magneticum (strain ATCC 700264 / AMB-1) (Magnetospirillum magneticum).